Consider the following 291-residue polypeptide: Taste receptor type 2 member 16 (291 aa).

Residue M1 is a topological domain, extracellular. A helical membrane pass occupies residues 2–22; it reads IPIQLTVFFMIIYVLESLTII. Topologically, residues 23-41 are cytoplasmic; that stretch reads VQSSLIVAVLGREWLQVRR. Residues 42–62 traverse the membrane as a helical segment; sequence LMPVDMILISLGISRFCLQWA. The Extracellular segment spans residues 63–84; sequence SMLNBFCSYFNLNYVLCNLTIT. N-linked (GlcNAc...) asparagine glycosylation is present at N80. A helical transmembrane segment spans residues 85–105; it reads WEFFNILTFWLNSLLTVFYCI. The Cytoplasmic portion of the chain corresponds to 106–125; it reads KVSSFTHHIFLWLRWRILRL. A helical membrane pass occupies residues 126-146; sequence FPWILLGSLMITCVTIIPSAI. The Extracellular portion of the chain corresponds to 147–182; that stretch reads GNYIQIQLLTMEHLPRNSTVTDKLEKFHQYEFQAHT. N-linked (GlcNAc...) asparagine glycosylation occurs at N163. A helical transmembrane segment spans residues 183-203; it reads VALVIPFILFLASTILLMASL. Over 204-228 the chain is Cytoplasmic; the sequence is TKQIQHHSTGHCNPSMKAHFTALRS. The chain crosses the membrane as a helical span at residues 229–249; that stretch reads LAVLFIVFTSYFLTILITIIG. Residues 250-257 are Extracellular-facing; it reads TLFDRRCW. A helical transmembrane segment spans residues 258 to 278; that stretch reads LWVWEAFVYAFILMHSTSLML. The Cytoplasmic segment spans residues 279–291; it reads SSPTLKRILKGKC.

Belongs to the G-protein coupled receptor T2R family. As to quaternary structure, interacts with RTP3 and RTP4.

Its subcellular location is the cell membrane. In terms of biological role, receptor that may play a role in the perception of bitterness and is gustducin-linked. May play a role in sensing the chemical composition of the gastrointestinal content. The activity of this receptor may stimulate alpha gustducin, mediate PLC-beta-2 activation and lead to the gating of TRPM5. The polypeptide is Taste receptor type 2 member 16 (TAS2R16) (Gorilla gorilla gorilla (Western lowland gorilla)).